We begin with the raw amino-acid sequence, 884 residues long: MHPFSRLFRNIQSLGEEEVQELLGPPEDALPLLAGEDLNHRVADALNLHLPTADLQWVHKTNAITGLYSNQAAQFNPNWIQPEFPELHLHNDLIQKLQQYFGPLTINEKRKLQLNFPARFFPKATKYFPLIKGIKNNYPNFALEHFFATANYLWTLWEAGILYLRKNQTTLTFKGKPYSWEHRQLVQHNGQQHKSHLQSRQNSSMVACSGHLLHNHLSSESVSVSTRNLSNNISDKSQKSTRTGLCSYKQIQTDRLEHLARISCGSKIFIGQQGSSPKTLYKSISSNFRNQTWAYNSSRNSGHTTWFSSASNSNKSRSREKAYSSNSTSKRYSPPLNYEKSDFSSPGVRRRITRLDNNGTPTQCLWRSFYNTKPCGSYCIHHIVSSLDDWGPCTVTGDVTIKSPRTPRRITGGVFLVDKNPNNSSESRLVVDFSQFSRGHTRVHWPKFAVPNLQTLANLLSTNLQWLSLDVSAAFYHIPISPAAVPHLLVGSPGLERFYTCLSSSTHNRNNSQLQTMHNLCTRHVYSSLLLLFKTYGRKLHLLAHPFIMGFRKLPMGVGLSPFLLAQFTSALASMVRRNFPHCVVFAYMDDLVLGARTSEHLTAIYSHICSVFLDLGIHLNVNKTKWWGNHLHFMGYVITSSGVLPQDKHVKKISRYLHSVPVNQPLDYKICERLTGILNYVAPFTLCGYAALMPLYHAIASRMAFIFSSLYKSWLLSLYEELWPVVRQRGVVCTVFADATPTGWGIATTCQLLSGTFAFPLPIATAELIAACLARCWTGARLLGTDNSVVLSGKLTSFPWLLACVAHWILRGTSFCYVPSALNPADLPSRGLLPALRPLPRLRLRPQTSRISLWAASPPVSPRRPVRVAWSSPVQTCEPWIPP.

A terminal protein domain (TP) region spans residues 1–184 (MHPFSRLFRN…GKPYSWEHRQ (184 aa)). Residues 185-387 (LVQHNGQQHK…YCIHHIVSSL (203 aa)) are spacer. Residues 299-345 (RNSGHTTWFSSASNSNKSRSREKAYSSNSTSKRYSPPLNYEKSDFSS) form a disordered region. Residues 388 to 729 (DDWGPCTVTG…YEELWPVVRQ (342 aa)) form a polymerase/reverse transcriptase domain (RT) region. The Reverse transcriptase domain occupies 398-639 (DVTIKSPRTP…NHLHFMGYVI (242 aa)). Aspartate 470, aspartate 590, and aspartate 591 together coordinate Mg(2+).

This sequence belongs to the hepadnaviridae P protein family.

The catalysed reaction is DNA(n) + a 2'-deoxyribonucleoside 5'-triphosphate = DNA(n+1) + diphosphate. It catalyses the reaction Endonucleolytic cleavage to 5'-phosphomonoester.. Its activity is regulated as follows. Activated by host HSP70 and HSP40 in vitro to be able to bind the epsilon loop of the pgRNA. Because deletion of the RNase H region renders the protein partly chaperone-independent, the chaperones may be needed indirectly to relieve occlusion of the RNA-binding site by this domain. Inhibited by several reverse-transcriptase inhibitors: Lamivudine, Adefovir and Entecavir. Its function is as follows. Multifunctional enzyme that converts the viral RNA genome into dsDNA in viral cytoplasmic capsids. This enzyme displays a DNA polymerase activity that can copy either DNA or RNA templates, and a ribonuclease H (RNase H) activity that cleaves the RNA strand of RNA-DNA heteroduplexes in a partially processive 3'- to 5'-endonucleasic mode. Neo-synthesized pregenomic RNA (pgRNA) are encapsidated together with the P protein, and reverse-transcribed inside the nucleocapsid. Initiation of reverse-transcription occurs first by binding the epsilon loop on the pgRNA genome, and is initiated by protein priming, thereby the 5'-end of (-)DNA is covalently linked to P protein. Partial (+)DNA is synthesized from the (-)DNA template and generates the relaxed circular DNA (RC-DNA) genome. After budding and infection, the RC-DNA migrates in the nucleus, and is converted into a plasmid-like covalently closed circular DNA (cccDNA). The activity of P protein does not seem to be necessary for cccDNA generation, and is presumably released from (+)DNA by host nuclear DNA repair machinery. The sequence is that of Protein P from Marmota monax (Woodchuck).